A 1066-amino-acid chain; its full sequence is Exportin-T (1066 aa).

This sequence belongs to the exportin family.

It is found in the nucleus. It localises to the cytoplasm. In terms of biological role, tRNA nucleus export receptor which facilitates tRNA translocation across the nuclear pore complex. Involved in pre-tRNA splicing, probably by affecting the interaction of pre-tRNA with splicing endonuclease. The sequence is that of Exportin-T (LOS1) from Laccaria bicolor (strain S238N-H82 / ATCC MYA-4686) (Bicoloured deceiver).